We begin with the raw amino-acid sequence, 505 residues long: Neuronal acetylcholine receptor subunit alpha-3 (505 aa).

An N-terminal signal peptide occupies residues 1-31 (MGSGPLSLPLALSPPRLLLLLLLSLLPVARA). Topologically, residues 32–250 (SEAEHRLFER…PLFYTINLII (219 aa)) are extracellular. Residues asparagine 55 and asparagine 172 are each glycosylated (N-linked (GlcNAc...) asparagine). 2 disulfide bridges follow: cysteine 159-cysteine 173 and cysteine 223-cysteine 224. The chain crosses the membrane as a helical span at residues 251-266 (PCLLISFLTVLVFYLP). Over 267 to 268 (SD) the chain is Cytoplasmic. The chain crosses the membrane as a helical span at residues 269-285 (CGEKVTLCISVLLSLTV). Topologically, residues 286 to 307 (FLLVITETIPSTSLVIPLIGEY) are extracellular. Residues 308–326 (LLFTMIFVTLSIVITVFVL) form a helical membrane-spanning segment. Residues 327-474 (NVHYRTPTTH…QDDWKYVAMV (148 aa)) are Cytoplasmic-facing. A phosphoserine mark is found at serine 413 and serine 416. A helical membrane pass occupies residues 475–493 (IDRIFLWVFTLVCILGTAG). Residues 494–505 (LFLQPLMAREDA) lie on the Extracellular side of the membrane.

Belongs to the ligand-gated ion channel (TC 1.A.9) family. Acetylcholine receptor (TC 1.A.9.1) subfamily. Alpha-3/CHRNA3 sub-subfamily. Neuronal AChR is composed of two different types of subunits: alpha and beta. CHRNA3/Alpha-3 subunit can be combined to CHRNA5/alpha-5, CHRNB2/beta-2 CHRNB3/beta-3 or CHRNB4/beta-4 to give rise to functional receptors. Forms stoichiometries such as (CHRNA3)2:(CHRNB4)3 or (CHRNA3:CHRNB4)2:CHRNB3. Part of a complex composed of STUB1/CHIP, VCP/p97, CHRNA3, and UBXN2A that modulates the ubiquitination and endoplasmic reticulum-associated degradation (ERAD) of CHRNA3. Within the complex UBXN2A acts as a scaffold protein required for the interaction of CHRNA3 with VCP/p97, this interaction also inhibits CHRNA3 ubiquitination by STUB1/CHIP and subsequently ERAD. Interacts with UBXN2A (via SEP domain), the interaction is required for the interaction of CHRNA3 in the STUB1:VCP:UBXN2A complex. Interacts with RIC3; which is required for proper folding and assembly. Interacts with LYPD6. In terms of processing, ubiquitinated; by STUB1/CHIP and thereafter degraded by the 26S proteosome complex.

It is found in the synaptic cell membrane. Its subcellular location is the cell membrane. It localises to the endoplasmic reticulum. The protein resides in the golgi apparatus. The catalysed reaction is Ca(2+)(in) = Ca(2+)(out). It catalyses the reaction K(+)(in) = K(+)(out). It carries out the reaction Na(+)(in) = Na(+)(out). Its activity is regulated as follows. Activated by a myriad of ligands such as acetylcholine, cytisine, nicotine, choline and epibatidine. The heteropentamer CHRNA3:CHRNB2 activity is blocked by alpha-conotoxins ImI, ImII, PnIA, GID and MII. The heteropentamer CHRNA3:CHRNB4 activity is blocked by the alpha-conotoxin ImI and AuIB. Its function is as follows. Component of neuronal acetylcholine receptors (nAChRs) that function as pentameric, ligand-gated cation channels with high calcium permeability among other activities. nAChRs are excitatory neurotrasnmitter receptors formed by a collection of nAChR subunits known to mediate synaptic transmission in the nervous system and the neuromuscular junction. Each nAchR subunit confers differential attributes to channel properties, including activation, deactivation and desensitization kinetics, pH sensitivity, cation permeability, and binding to allosteric modulators. CHRNA3 forms heteropentameric neuronal acetylcholine receptors with CHRNB2 and CHRNB4, with CHRNA5, and CHRNB3 as accesory subunits. CHRNA3:CHRNB4 being predominant in neurons of the autonomic ganglia, it is known as ganglionic nicotinic receptor. CHRNA3:CHRNB4 or CHRNA3:CHRNA5:CHRNB4 play also an important role in the habenulo-interpeduncular tract, modulating the mesolimbic dopamine system and affecting reward circuits and addiction. Hypothalamic CHRNA3:CHRNB4 nAChR activation by nicotine leads to activation of POMC neurons and a decrease in food intake. Also expressed in the urothelium where it modulates reflex bladder activity by increasing intracellular calcium through extracellular influx and basal ATP release. The polypeptide is Neuronal acetylcholine receptor subunit alpha-3 (Homo sapiens (Human)).